The sequence spans 239 residues: Purine nucleoside phosphorylase DeoD-type (239 aa).

His-5 is a binding site for a purine D-ribonucleoside. Phosphate-binding positions include Gly-21, Arg-25, Arg-44, and Arg-88–Ser-91. A purine D-ribonucleoside contacts are provided by residues Glu-180–Glu-182 and Ser-204–Asp-205. Asp-205 acts as the Proton donor in catalysis.

Belongs to the PNP/UDP phosphorylase family. As to quaternary structure, homohexamer; trimer of homodimers.

The catalysed reaction is a purine D-ribonucleoside + phosphate = a purine nucleobase + alpha-D-ribose 1-phosphate. It carries out the reaction a purine 2'-deoxy-D-ribonucleoside + phosphate = a purine nucleobase + 2-deoxy-alpha-D-ribose 1-phosphate. In terms of biological role, catalyzes the reversible phosphorolytic breakdown of the N-glycosidic bond in the beta-(deoxy)ribonucleoside molecules, with the formation of the corresponding free purine bases and pentose-1-phosphate. This Yersinia pestis bv. Antiqua (strain Antiqua) protein is Purine nucleoside phosphorylase DeoD-type.